Here is a 913-residue protein sequence, read N- to C-terminus: Protein SEY1 homolog (913 aa).

Over 1–825 (MANASKTQII…ETGGQMSLKN (825 aa)) the chain is Cytoplasmic. One can recognise a GB1/RHD3-type G domain in the interval 33–288 (GFNYNVIAIL…IPADGFAQYC (256 aa)). 43–50 (GSQSSGKS) is a binding site for GTP. 2 disordered regions span residues 89–108 (AGGS…GDKP) and 436–455 (TEQD…AKKG). Coiled-coil stretches lie at residues 636 to 659 (DDEN…MESL) and 703 to 727 (IEII…VIIN). The chain crosses the membrane as a helical span at residues 826 to 846 (VPFAFWVILLILGWNEILMFT). The Lumenal portion of the chain corresponds to 847–849 (RLF). Residues 850 to 870 (FRLNIILPMFMAFIIIVGSCL) traverse the membrane as a helical segment. Residues 871 to 913 (YTGNAQVLSYLNKIAFIVIKHSYNFYKHLQTVGNQPTKPEKVD) are Cytoplasmic-facing.

Belongs to the TRAFAC class dynamin-like GTPase superfamily. GB1/RHD3 GTPase family. RHD3 subfamily.

Its subcellular location is the endoplasmic reticulum membrane. Its function is as follows. Probable GTP-binding protein involved in generating and maintaining the structure of the tubular endoplasmic reticulum network. The protein is Protein SEY1 homolog of Plasmodium chabaudi chabaudi.